The primary structure comprises 308 residues: HTH-type transcriptional activator AllS (308 aa).

The HTH lysR-type domain maps to 2–59 (FDPETLRTFIAVAETGSFSKAAERLCKTTATISYRIKLLEENTGVALFFRTTRSVTLT). The H-T-H motif DNA-binding region spans 19-38 (FSKAAERLCKTTATISYRIK).

Belongs to the LysR transcriptional regulatory family.

Positive regulator essential for the expression of AllD operon. Binds to the AllD promoter. The chain is HTH-type transcriptional activator AllS (allS) from Escherichia coli O157:H7.